Reading from the N-terminus, the 254-residue chain is Pimeloyl-[acyl-carrier protein] methyl ester esterase (254 aa).

The AB hydrolase-1 domain maps to 14–242 (LVLLHGWGMN…ASHAPFISHP (229 aa)). Residues W20, 82-83 (SL), and 143-147 (FLAIQ) each bind substrate. The active-site Nucleophile is S82. Catalysis depends on residues D207 and H235. H235 is a substrate binding site.

Belongs to the AB hydrolase superfamily. Carboxylesterase BioH family. In terms of assembly, monomer.

The protein resides in the cytoplasm. It carries out the reaction 6-carboxyhexanoyl-[ACP] methyl ester + H2O = 6-carboxyhexanoyl-[ACP] + methanol + H(+). It participates in cofactor biosynthesis; biotin biosynthesis. The physiological role of BioH is to remove the methyl group introduced by BioC when the pimeloyl moiety is complete. It allows to synthesize pimeloyl-ACP via the fatty acid synthetic pathway through the hydrolysis of the ester bonds of pimeloyl-ACP esters. The protein is Pimeloyl-[acyl-carrier protein] methyl ester esterase of Aeromonas salmonicida (strain A449).